Consider the following 483-residue polypeptide: MKHKPETAAFSLIRPLEAWAANANKACNTKKMLPCLGRKWMRLSTRNLKPTWNLINVVDASKTIVRGISGGAETIAKERVDTVVIGAGVVGLAVARELSLRGREVLILDAASSFGTVTSSRNSEVVHAGIYYPPNSLKAKFCVRGRELLYKYCSEYEIPHKKIGKLIVATGSSEIPKLDLLMHLGTQNRVSGLRMLEGFEAMRMEPQLRCVKALLSPESGILDTHSFMLSLVEKSFDFMVYRDNNNLRLQGEAQNNHATFSYNTVVLNGRVEEKKMHLYVADTRFSESRCEAEAQLELIPNLVVNSAGLGAQALAKRLHGLDHRFVPSSHYARGCYFTLSGIKAPPFNKLVYPIPEEGGLGVHVTVDLNGLVKFGPDVEWIECTDDTSSFLNKFDYRVNPQRSEKFYPEIRKYYPDLKDGSLEPGYSGIRPKLSGPKQSPADFVIQGEETHGVPGLVNLFGIESPGLTSSLAIAEHIANKFLR.

Residues 1 to 67 (MKHKPETAAF…VDASKTIVRG (67 aa)) constitute a mitochondrion transit peptide.

Belongs to the L2HGDH family. FAD serves as cofactor.

Its subcellular location is the mitochondrion. It catalyses the reaction (S)-2-hydroxyglutarate + A = 2-oxoglutarate + AH2. Functionally, catalyzes the oxidation of (S)-2-hydroxyglutarate to 2-oxoglutarate. Is specific for the (S) enantiomer and possesses very poor activity toward (R)-2-hydroxyglutarate. Has no activity toward related 2-hydroxy acids, such as glycolate, L-lactate or D-lactate. The sequence is that of L-2-hydroxyglutarate dehydrogenase, mitochondrial from Arabidopsis thaliana (Mouse-ear cress).